A 288-amino-acid chain; its full sequence is G1/S-specific cyclin-D2 (288 aa).

The 126-residue stretch at 26-151 (VLQNLLTIEE…VVLGKLKWNL (126 aa)) folds into the Cyclin N-terminal domain. Positions 264 to 288 (DQDGSKSEDELDQASTPTDVRDIDL) are disordered. S270 carries the post-translational modification Phosphoserine. Phosphothreonine is present on T279.

This sequence belongs to the cyclin family. Cyclin D subfamily. Interacts with either CDK4 or CDK6 protein kinase to form a serine/threonine kinase holoenzyme complex. The cyclin subunit imparts substrate specificity to the complex. Phosphorylation at Thr-279 by MAP kinases is required for ubiquitination and degradation by the DCX(AMBRA1) complex. In terms of processing, ubiquitinated by the DCX(AMBRA1) complex during the transition from G1 to S cell phase, leading to its degradation: ubiquitination is dependent on Thr-279 phosphorylation. The DCX(AMBRA1) complex represents the major regulator of CCND2 stability during the G1/S transition. Polyubiquitinated by the SCF(FBXL2) complex, leading to proteasomal degradation.

The protein localises to the nucleus. Its subcellular location is the cytoplasm. The protein resides in the nucleus membrane. In terms of biological role, regulatory component of the cyclin D2-CDK4 (DC) complex that phosphorylates and inhibits members of the retinoblastoma (RB) protein family including RB1 and regulates the cell-cycle during G(1)/S transition. Phosphorylation of RB1 allows dissociation of the transcription factor E2F from the RB/E2F complex and the subsequent transcription of E2F target genes which are responsible for the progression through the G(1) phase. Hypophosphorylates RB1 in early G(1) phase. Cyclin D-CDK4 complexes are major integrators of various mitogenenic and antimitogenic signals. The polypeptide is G1/S-specific cyclin-D2 (CCND2) (Sus scrofa (Pig)).